The chain runs to 109 residues: Nucleoid-associated protein ECA1177 (109 aa).

The protein belongs to the YbaB/EbfC family. In terms of assembly, homodimer.

It localises to the cytoplasm. Its subcellular location is the nucleoid. Its function is as follows. Binds to DNA and alters its conformation. May be involved in regulation of gene expression, nucleoid organization and DNA protection. This chain is Nucleoid-associated protein ECA1177, found in Pectobacterium atrosepticum (strain SCRI 1043 / ATCC BAA-672) (Erwinia carotovora subsp. atroseptica).